Here is a 321-residue protein sequence, read N- to C-terminus: ATP phosphoribosyltransferase regulatory subunit (321 aa).

It belongs to the class-II aminoacyl-tRNA synthetase family. HisZ subfamily. In terms of assembly, heteromultimer composed of HisG and HisZ subunits.

The protein resides in the cytoplasm. It functions in the pathway amino-acid biosynthesis; L-histidine biosynthesis; L-histidine from 5-phospho-alpha-D-ribose 1-diphosphate: step 1/9. In terms of biological role, required for the first step of histidine biosynthesis. May allow the feedback regulation of ATP phosphoribosyltransferase activity by histidine. In Thiobacillus denitrificans (strain ATCC 25259 / T1), this protein is ATP phosphoribosyltransferase regulatory subunit.